We begin with the raw amino-acid sequence, 431 residues long: Trigger factor (431 aa).

Residues 163–248 (GDTVVIDYAG…IHEVKGKELP (86 aa)) enclose the PPIase FKBP-type domain.

This sequence belongs to the FKBP-type PPIase family. Tig subfamily.

It localises to the cytoplasm. It catalyses the reaction [protein]-peptidylproline (omega=180) = [protein]-peptidylproline (omega=0). Involved in protein export. Acts as a chaperone by maintaining the newly synthesized protein in an open conformation. Functions as a peptidyl-prolyl cis-trans isomerase. The chain is Trigger factor from Latilactobacillus sakei subsp. sakei (strain 23K) (Lactobacillus sakei subsp. sakei).